A 342-amino-acid polypeptide reads, in one-letter code: S-adenosylmethionine:tRNA ribosyltransferase-isomerase (342 aa).

The protein belongs to the QueA family. Monomer.

It is found in the cytoplasm. It catalyses the reaction 7-aminomethyl-7-carbaguanosine(34) in tRNA + S-adenosyl-L-methionine = epoxyqueuosine(34) in tRNA + adenine + L-methionine + 2 H(+). The protein operates within tRNA modification; tRNA-queuosine biosynthesis. Its function is as follows. Transfers and isomerizes the ribose moiety from AdoMet to the 7-aminomethyl group of 7-deazaguanine (preQ1-tRNA) to give epoxyqueuosine (oQ-tRNA). In Streptococcus sanguinis (strain SK36), this protein is S-adenosylmethionine:tRNA ribosyltransferase-isomerase.